A 138-amino-acid polypeptide reads, in one-letter code: Large ribosomal subunit protein uL16 (138 aa).

Residues 1-19 (MLSPKRTKYRKAHKGRIHG) are compositionally biased toward basic residues. The segment at 1–21 (MLSPKRTKYRKAHKGRIHGNA) is disordered.

Belongs to the universal ribosomal protein uL16 family. Part of the 50S ribosomal subunit.

Functionally, binds 23S rRNA and is also seen to make contacts with the A and possibly P site tRNAs. In Granulibacter bethesdensis (strain ATCC BAA-1260 / CGDNIH1), this protein is Large ribosomal subunit protein uL16.